A 261-amino-acid chain; its full sequence is Hemin import ATP-binding protein HmuV (261 aa).

The ABC transporter domain maps to L3–E243. G35–S42 serves as a coordination point for ATP.

The protein belongs to the ABC transporter superfamily. Heme (hemin) importer (TC 3.A.1.14.5) family. The complex is composed of two ATP-binding proteins (HmuV), two transmembrane proteins (HmuU) and a solute-binding protein (HmuT).

Its subcellular location is the cell inner membrane. Part of the ABC transporter complex HmuTUV involved in hemin import. Responsible for energy coupling to the transport system. This Bordetella avium (strain 197N) protein is Hemin import ATP-binding protein HmuV.